Consider the following 358-residue polypeptide: L-tryptophan methyltransferase trpM (358 aa).

Belongs to the methyltransferase superfamily.

The enzyme catalyses L-tryptophan + S-adenosyl-L-methionine = N(alpha)-methyl-L-tryptophan + S-adenosyl-L-homocysteine + H(+). The catalysed reaction is N(alpha)-methyl-L-tryptophan + S-adenosyl-L-methionine = N(alpha),N(alpha)-dimethyl-L-tryptophan + S-adenosyl-L-homocysteine + H(+). It carries out the reaction N(alpha),N(alpha)-dimethyl-L-tryptophan + S-adenosyl-L-methionine = N(alpha),N(alpha),N(alpha)-trimethyl-L-tryptophan + S-adenosyl-L-homocysteine + H(+). In terms of biological role, methyltransferase that catalyzes iterative L-tryptophan N-methylations to produce L-abrine (N-alpha-methyl-L-tryptophan) and N,N-alpha-dimethyl-L-tryptophan. Also catalyzes a third methylation to yield L-hypaphorine (N,N,N-alpha-trimethyl-L-tryptopan), an agonist of the phytohormone indole-3-acetic acid. Can also N-methylate the non-native amino acid substrate 4-hydroxytryptophan, but the ability to incorporate trpM into a functional psilocybin biosynthesis pathway is indeed thwarted by the inability of the L-tryptophan decarboxylase psiD to use N,N-dimethyl-4-hydroxytryptophan as substrate. This is L-tryptophan methyltransferase trpM from Psilocybe serbica.